Reading from the N-terminus, the 183-residue chain is uncharacterized protein (183 aa).

The tract at residues 1–36 (MAKRGNKKKQEAPLSLGKHTVGGRVGKPTNAKTGSA) is disordered. An RRM domain is found at 100-174 (TNVVIENLAP…FKLSCYIKKN (75 aa)).

It is found in the nucleus. It localises to the nucleolus. This is an uncharacterized protein from Schizosaccharomyces pombe (strain 972 / ATCC 24843) (Fission yeast).